The primary structure comprises 305 residues: C alpha-dehydrogenase (305 aa).

Residue 10-34 coordinates NAD(+); that stretch reads FITGGASGAGFGQAKVFGQAGAKIV. Position 144 (Ser144) interacts with substrate. The Proton acceptor role is filled by Tyr157.

The protein belongs to the short-chain dehydrogenases/reductases (SDR) family.

It functions in the pathway secondary metabolite metabolism; lignin degradation. Its function is as follows. Catalyzes the C alpha dehydrogenation of arylglycerol-beta-aryl ether (C alpha alcohol type) (compound IV). In Sphingobium sp. (strain NBRC 103272 / SYK-6), this protein is C alpha-dehydrogenase (ligD).